Reading from the N-terminus, the 305-residue chain is Cyclin-dependent kinase 3 (305 aa).

The 283-residue stretch at 4-286 (FQKVEKIGEG…AKTALAHPYF (283 aa)) folds into the Protein kinase domain. Residues 10–18 (IGEGTYGVV) and lysine 33 contribute to the ATP site. The active-site Proton acceptor is aspartate 127.

It belongs to the protein kinase superfamily. CMGC Ser/Thr protein kinase family. CDC2/CDKX subfamily. As to quaternary structure, interacts with CABLES1 and CABLES2. Interacts with ATF1. Binding to CCNC/cyclin-C promotes RB1 phosphorylation. In terms of tissue distribution, expressed in cancer cell lines and glioblastoma tissue.

The enzyme catalyses L-seryl-[protein] + ATP = O-phospho-L-seryl-[protein] + ADP + H(+). It carries out the reaction L-threonyl-[protein] + ATP = O-phospho-L-threonyl-[protein] + ADP + H(+). In terms of biological role, serine/threonine-protein kinase that plays a critical role in the control of the eukaryotic cell cycle; involved in G0-G1 and G1-S cell cycle transitions. Interacts with CCNC/cyclin-C during interphase. Phosphorylates histone H1, ATF1, RB1 and CABLES1. ATF1 phosphorylation triggers ATF1 transactivation and transcriptional activities, and promotes cell proliferation and transformation. CDK3/cyclin-C mediated RB1 phosphorylation is required for G0-G1 transition. Promotes G1-S transition probably by contributing to the activation of E2F1, E2F2 and E2F3 in a RB1-independent manner. In Homo sapiens (Human), this protein is Cyclin-dependent kinase 3 (CDK3).